We begin with the raw amino-acid sequence, 436 residues long: UPF0597 protein YhaM (436 aa).

Belongs to the UPF0597 family.

This is UPF0597 protein YhaM from Escherichia coli O7:K1 (strain IAI39 / ExPEC).